We begin with the raw amino-acid sequence, 73 residues long: Putative antitoxin VapB16 (73 aa).

It belongs to the UPF0330 family.

Functionally, possibly the antitoxin component of a type II toxin-antitoxin (TA) system. Its cognate toxin is VapC16 (Potential). This Archaeoglobus fulgidus (strain ATCC 49558 / DSM 4304 / JCM 9628 / NBRC 100126 / VC-16) protein is Putative antitoxin VapB16 (vapB16).